Reading from the N-terminus, the 131-residue chain is Agouti-signaling protein (131 aa).

The signal sequence occupies residues 1-22; it reads MDVTRLLLATLVGFLCFFTVHS. Asparagine 39 is a glycosylation site (N-linked (GlcNAc...) asparagine). Positions 58 to 100 are disordered; sequence KSKKISRKEAEKRKRSSKKKASMKKVARPPPPSPCVATRDSCK. Basic residues predominate over residues 70–84; it reads RKRSSKKKASMKKVA. Disulfide bonds link cysteine 92–cysteine 107, cysteine 99–cysteine 113, cysteine 106–cysteine 124, cysteine 110–cysteine 131, and cysteine 115–cysteine 122. The region spanning 92–131 is the Agouti domain; sequence CVATRDSCKPPAPACCDPCASCQCRFFGSACTCRVLNPNC.

Epithelial cells of the hair follicles and the epidermis.

The protein localises to the secreted. Its function is as follows. Involved in the regulation of melanogenesis. The binding of ASP to MC1R precludes alpha-MSH initiated signaling and thus blocks production of cAMP, leading to a down-regulation of eumelanogenesis (brown/black pigment) and thus increasing synthesis of pheomelanin (yellow/red pigment). Causes hair follicle melanocytes to synthesize phaeomelanin instead of black or brown pigment eumelanin and produces hairs with a subapical yellow band on an otherwise black or brown background when expressed during the mid-portion of hair growth. This Mus musculus (Mouse) protein is Agouti-signaling protein (Asip).